The primary structure comprises 157 residues: Endoribonuclease YbeY (157 aa).

Residues histidine 113, histidine 117, and histidine 123 each contribute to the Zn(2+) site.

It belongs to the endoribonuclease YbeY family. The cofactor is Zn(2+).

The protein resides in the cytoplasm. Functionally, single strand-specific metallo-endoribonuclease involved in late-stage 70S ribosome quality control and in maturation of the 3' terminus of the 16S rRNA. The sequence is that of Endoribonuclease YbeY from Ehrlichia ruminantium (strain Gardel).